The sequence spans 420 residues: UDP-N-acetylglucosamine 1-carboxyvinyltransferase (420 aa).

22 to 23 (KN) serves as a coordination point for phosphoenolpyruvate. Arg94 contacts UDP-N-acetyl-alpha-D-glucosamine. The active-site Proton donor is Cys118. Cys118 carries the 2-(S-cysteinyl)pyruvic acid O-phosphothioketal modification. 2 residues coordinate UDP-N-acetyl-alpha-D-glucosamine: Asp307 and Ile329.

Belongs to the EPSP synthase family. MurA subfamily.

It is found in the cytoplasm. It catalyses the reaction phosphoenolpyruvate + UDP-N-acetyl-alpha-D-glucosamine = UDP-N-acetyl-3-O-(1-carboxyvinyl)-alpha-D-glucosamine + phosphate. The protein operates within cell wall biogenesis; peptidoglycan biosynthesis. Functionally, cell wall formation. Adds enolpyruvyl to UDP-N-acetylglucosamine. The protein is UDP-N-acetylglucosamine 1-carboxyvinyltransferase of Granulibacter bethesdensis (strain ATCC BAA-1260 / CGDNIH1).